Here is a 342-residue protein sequence, read N- to C-terminus: L-threonine 3-dehydrogenase (342 aa).

A Zn(2+)-binding site is contributed by cysteine 38. Residues threonine 40 and histidine 43 each act as charge relay system in the active site. Residues histidine 63, glutamate 64, cysteine 93, cysteine 96, cysteine 99, and cysteine 107 each contribute to the Zn(2+) site. Residues isoleucine 175, aspartate 195, arginine 200, 262–264, and 286–287 each bind NAD(+); these read LGI and IY.

It belongs to the zinc-containing alcohol dehydrogenase family. Homotetramer. It depends on Zn(2+) as a cofactor.

The protein resides in the cytoplasm. The catalysed reaction is L-threonine + NAD(+) = (2S)-2-amino-3-oxobutanoate + NADH + H(+). The protein operates within amino-acid degradation; L-threonine degradation via oxydo-reductase pathway; glycine from L-threonine: step 1/2. In terms of biological role, catalyzes the NAD(+)-dependent oxidation of L-threonine to 2-amino-3-ketobutyrate. This Burkholderia ambifaria (strain ATCC BAA-244 / DSM 16087 / CCUG 44356 / LMG 19182 / AMMD) (Burkholderia cepacia (strain AMMD)) protein is L-threonine 3-dehydrogenase.